We begin with the raw amino-acid sequence, 766 residues long: Signal transducer and activator of transcription 3.2 (766 aa).

The short motif at 150 to 162 (DVRKKVQDLEQKM) is the Essential for nuclear import element. Residues 580-670 (WNEGYIIGFI…DATNILVSPL (91 aa)) enclose the SH2 domain. At S725 the chain carries Phosphoserine; by NLK.

This sequence belongs to the transcription factor STAT family. As to quaternary structure, forms a homodimer or a heterodimer with a related family member. Interacts with nlk.2. In terms of processing, phosphorylation of both tyrosine and serine residues, together with dimerization, is required for mesoderm induction.

Its subcellular location is the cytoplasm. It is found in the nucleus. Transcription factor that binds to target promoter sequences and activates transcription upon il6st/gp130 stimulation. Mediates ventralization of embryos, at least in part via inhibition of smad2 signaling. Required for hairy2 to induce dll1/delta1 and promote neural crest cell proliferation and differentiation. Involved in TGFbeta-mediated mesoderm induction in early embryos, acting downstream of map3k7/tak1 and nlk.2. The polypeptide is Signal transducer and activator of transcription 3.2 (stat3.2) (Xenopus laevis (African clawed frog)).